Reading from the N-terminus, the 173-residue chain is MDVRFPIGKLQVPEKVTIEDIHEWLKQIETYTNRLGETVNSLNDEELSKTYREGSWDIRQLVHHIADSQLNMYQRLKLALTDESPTVPAFDQEKWAIQPDTNLPVETSIKMLEGINERIVSLGYRLTEEQLDQSFVHQINGEISVASKVAKLAWHEEHHLAHIKIALSNNSGS.

Residues His-64, His-155, and His-159 each coordinate Zn(2+).

The protein belongs to the metal hydrolase YfiT family. As to quaternary structure, homodimer. The cofactor is Zn(2+).

The protein resides in the cytoplasm. Its function is as follows. Possible metal-dependent hydrolase. In Oceanobacillus iheyensis (strain DSM 14371 / CIP 107618 / JCM 11309 / KCTC 3954 / HTE831), this protein is Putative metal-dependent hydrolase OB0413.